We begin with the raw amino-acid sequence, 1543 residues long: ABC multidrug transporter AFR1 (1543 aa).

The segment at 1–85 is disordered; the sequence is MSAAGVPAEL…DGKQKRLPAD (85 aa). Over residues 18–41 the composition is skewed to polar residues; it reads TATTQNPSGLANSQVTSGPVSSAT. The span at 62–83 shows a compositional bias: basic and acidic residues; the sequence is AVEAEKAEAIDAAGDGKQKRLP. Residue N117 is glycosylated (N-linked (GlcNAc...) asparagine). The interval 119-157 is disordered; the sequence is SQRSQHELHRPTTRHSVRSSFSRKDRVVSRLTQDDAEKA. Over residues 140 to 157 the composition is skewed to basic and acidic residues; sequence SRKDRVVSRLTQDDAEKA. Residues N208 and N398 are each glycosylated (N-linked (GlcNAc...) asparagine). The region spanning 222–474 is the ABC transporter 1 domain; the sequence is IKVLGIFGFN…MIGLGYRDLP (253 aa). The next 5 membrane-spanning stretches (helical) occupy residues 585–605, 619–639, 670–690, 695–715, and 727–747; these read FGIS…GSVY, GGLL…ELPS, VPYN…MGGL, GAFF…SAFF, and VAAR…GYMI. N823 carries an N-linked (GlcNAc...) asparagine glycan. The chain crosses the membrane as a helical span at residues 845–865; the sequence is FGILLGFFTFFMFLQMLFIEV. The ABC transporter 2 domain maps to 918 to 1160; it reads FTWEGLSYTV…VLIDYLERNG (243 aa). An ATP-binding site is contributed by 954–961; the sequence is GASGAGKT. The N-linked (GlcNAc...) asparagine glycan is linked to N1223. The next 6 helical transmembrane spans lie at 1254 to 1274, 1285 to 1305, 1336 to 1356, 1366 to 1386, 1391 to 1411, and 1517 to 1537; these read WTRL…FLQL, VFAI…IEPQ, MPYS…GVGF, FFLM…AVAA, ILIA…FCGV, and FGIF…AARF.

Belongs to the ABC transporter superfamily. ABCG family. PDR (TC 3.A.1.205) subfamily.

It localises to the cell membrane. The catalysed reaction is itraconazole(in) + ATP + H2O = itraconazole(out) + ADP + phosphate + H(+). The enzyme catalyses voriconazole(in) + ATP + H2O = voriconazole(out) + ADP + phosphate + H(+). It carries out the reaction fluconazole(in) + ATP + H2O = fluconazole(out) + ADP + phosphate + H(+). Its function is as follows. Major pleiotropic ABC efflux transporter that confers resistance to structurally and functionally unrelated compounds including azoles such as fluconazole (FLC), itraconazole (ITC), posaconazole (POS), and voriconazole (VRC). Is also able to efflux the eukaryote protein synthesis inhibitor cycloheximide (CHX). The polypeptide is ABC multidrug transporter AFR1 (Cryptococcus neoformans var. grubii serotype A (strain H99 / ATCC 208821 / CBS 10515 / FGSC 9487) (Filobasidiella neoformans var. grubii)).